The sequence spans 76 residues: Small, acid-soluble spore protein Tlp (76 aa).

Composition is skewed to basic and acidic residues over residues 1–15 (MAKR…ERIE), 26–38 (DEAR…HSEE), and 46–76 (EIEQ…KNNS). The segment at 1–76 (MAKRDDRSNN…DEVNDQKNNS (76 aa)) is disordered.

It belongs to the Tlp family.

The protein localises to the spore core. In Shouchella clausii (strain KSM-K16) (Alkalihalobacillus clausii), this protein is Small, acid-soluble spore protein Tlp.